Here is a 123-residue protein sequence, read N- to C-terminus: Fluoride-specific ion channel FluC (123 aa).

4 consecutive transmembrane segments (helical) span residues Ile3–Ala23, Trp34–Phe54, Leu67–Leu87, and Leu99–Val119. Na(+)-binding residues include Gly74 and Thr77.

The protein belongs to the fluoride channel Fluc/FEX (TC 1.A.43) family.

It is found in the cell inner membrane. It catalyses the reaction fluoride(in) = fluoride(out). With respect to regulation, na(+) is not transported, but it plays an essential structural role and its presence is essential for fluoride channel function. Its function is as follows. Fluoride-specific ion channel. Important for reducing fluoride concentration in the cell, thus reducing its toxicity. The polypeptide is Fluoride-specific ion channel FluC (Magnetococcus marinus (strain ATCC BAA-1437 / JCM 17883 / MC-1)).